A 66-amino-acid polypeptide reads, in one-letter code: Large ribosomal subunit protein bL31 (66 aa).

4 residues coordinate Zn(2+): Cys16, Cys18, Cys36, and Cys39.

This sequence belongs to the bacterial ribosomal protein bL31 family. Type A subfamily. Part of the 50S ribosomal subunit. Requires Zn(2+) as cofactor.

Binds the 23S rRNA. The polypeptide is Large ribosomal subunit protein bL31 (Campylobacter hominis (strain ATCC BAA-381 / DSM 21671 / CCUG 45161 / LMG 19568 / NCTC 13146 / CH001A)).